The following is a 339-amino-acid chain: Uroporphyrinogen decarboxylase (339 aa).

Residues 21-25 (RQAGR), aspartate 71, tyrosine 147, serine 202, and histidine 315 each bind substrate.

Belongs to the uroporphyrinogen decarboxylase family. In terms of assembly, homodimer.

Its subcellular location is the cytoplasm. The enzyme catalyses uroporphyrinogen III + 4 H(+) = coproporphyrinogen III + 4 CO2. It functions in the pathway porphyrin-containing compound metabolism; protoporphyrin-IX biosynthesis; coproporphyrinogen-III from 5-aminolevulinate: step 4/4. Catalyzes the decarboxylation of four acetate groups of uroporphyrinogen-III to yield coproporphyrinogen-III. In Helicobacter pylori (strain Shi470), this protein is Uroporphyrinogen decarboxylase.